The primary structure comprises 71 residues: Large ribosomal subunit protein bL31 (71 aa).

Residues Cys-16, Cys-18, Cys-36, and Cys-39 each coordinate Zn(2+).

This sequence belongs to the bacterial ribosomal protein bL31 family. Type A subfamily. Part of the 50S ribosomal subunit. It depends on Zn(2+) as a cofactor.

Functionally, binds the 23S rRNA. This chain is Large ribosomal subunit protein bL31, found in Pseudothermotoga lettingae (strain ATCC BAA-301 / DSM 14385 / NBRC 107922 / TMO) (Thermotoga lettingae).